A 388-amino-acid polypeptide reads, in one-letter code: L-lactate dehydrogenase (388 aa).

The FMN hydroxy acid dehydrogenase domain maps to M1 to R380. A substrate-binding site is contributed by Y24. S106 and Q127 together coordinate FMN. Position 129 (Y129) interacts with substrate. Residue T155 coordinates FMN. R164 contributes to the substrate binding site. K251 contacts FMN. H275 acts as the Proton acceptor in catalysis. Substrate is bound at residue R278. Position 306 to 330 (D306 to R330) interacts with FMN.

The protein belongs to the FMN-dependent alpha-hydroxy acid dehydrogenase family. FMN is required as a cofactor.

The protein resides in the cell inner membrane. The enzyme catalyses (S)-lactate + A = pyruvate + AH2. Its function is as follows. Catalyzes the conversion of L-lactate to pyruvate. Is coupled to the respiratory chain. This is L-lactate dehydrogenase from Xanthomonas axonopodis pv. citri (strain 306).